A 1244-amino-acid polypeptide reads, in one-letter code: MDNCPPASTFLTDSLELELQTEWCNPPCFSCDFDNRGGGKHFSGESYLSSGALKRVILNLDPLPTNFEEDTVEIFGIEWVTETALVNSSRVLFHLFRQQLYNLETLLQASCDFGKISTLHCKAHNIRQLCVTFLHYVKVFIFRSLQVRNAESHVPVHPYETLEAQLPSVLVDELHGLLLYIGHLSELPTTNTGAFVNQNQTKLYPPSWHLLHLHLDIHWLVLEILHMLGEKLKQVVYSHQFMNLAGDNLTNVSLFEEHCENLLCDLINLSLNRYDKKVRPSEALMSHHCPCPCIKELWVLLIHLLNHRSKWSLSESFWNWLNKLLKTLLEKSNDQRRSVLIVQPRDPLGFSWWIITHVASFYQFDRHGTPDEMRQMESNWNFVEELLKKSISVQDGILEEQLRMYLHCCLTLCDFWEPNIAIVTILWEYYSKNLNSSFSISWLPLKGLTYIIKSPLSMLEMVKTCCCDKQDHDLYKSSSSYTIFLCILAKVVKKAMKNNGPHPWKQVKGRIYSKFHQKRMEELTEVGLQNFFSLFLLLAAVAEVEDVASHVLRLLDFLKPTFKTSPLIWKGQMAFLLMYTQKNLDIGVLAEKFSNAFREKAKEFLVSKNDEMGQRQTLWTLLSIYMDSVQEVFETSRCLHPSHEKLLNDGFSMLLRACQESELRTVLNFLQAVLARIRSLHQQLRQELQREHGDLSVQSSLSTKERHLAAVASALWRHFFSFLKSQRMSQIVPLSQLADAAADFTLLAMDLPSTAPSDLQPQPVTSMIQLFGWDDIIWPQVVARYLSHFLQNSMLCEALSHSGCVSFQALTVRSWIRCILQMYVKNLHVPDDSFIDINPEQAVEKDYMEQLTELTRLLFKLSEVKNIFSKSQVELPIPDDPKKALIRFFEAVGITYGNLQTVSDKSAMVTKSLEYLGEILKYIKPYLGKKVSSAGLQLTYTMMGTLVKSWALIFATSKAQKLLFRIIDCLLLPHTVLQQEKELPAPMLTAIQKSLPLYLQGMCIVCCQSQNTNAYLNQLLGNVIEQYIGRFLPASAHVLGLGQHPVLLALKNSASVPPMSLLKKCIVHVIRKSYFEFKGSLLPPRLASILAFILQLVKETNTDVSEIELLLPGVLKCLLLVSEPQVKRLATENLQCMVRACQVGSGGEPAAQLTSVFRQFIEDYGMRYDYQIYSILEAVAALDQQVVIHLVPTLTQSLKNSERKWGLGRNSAQREAYSKLLSQLGQVGQDEIQRLENDHIESML.

This sequence belongs to the MMS22 family. MMS22L subfamily. In terms of assembly, component of the MMS22L-TONSL complex, a complex at least composed of MMS22L and TONSL/NFKBIL2. Interacts with RAD51; interaction is direct. Degraded by the ubiquitin-proteasome system upon replication stress.

It localises to the nucleus. The protein localises to the chromosome. In terms of biological role, component of the MMS22L-TONSL complex, a complex that promotes homologous recombination-mediated repair of double-strand breaks (DSBs) at stalled or collapsed replication forks. The MMS22L-TONSL complex is required to maintain genome integrity during DNA replication. It mediates the assembly of RAD51 filaments on single-stranded DNA (ssDNA): the MMS22L-TONSL complex is recruited to DSBs following histone replacement by histone chaperones and eviction of the replication protein A complex (RPA/RP-A) from DSBs. Following recruitment to DSBs, the TONSL-MMS22L complex promotes recruitment of RAD51 filaments and subsequent homologous recombination. Within the complex, MMS22L acts by binding ssDNA. This chain is Protein MMS22-like (MMS22L), found in Bos taurus (Bovine).